A 199-amino-acid chain; its full sequence is HTH-type transcriptional regulator BetI (199 aa).

In terms of domain architecture, HTH tetR-type spans glutamate 8–leucine 68. The H-T-H motif DNA-binding region spans serine 31–phenylalanine 50.

The protein operates within amine and polyamine biosynthesis; betaine biosynthesis via choline pathway [regulation]. Its function is as follows. Repressor involved in the biosynthesis of the osmoprotectant glycine betaine. It represses transcription of the choline transporter BetT and the genes of BetAB involved in the synthesis of glycine betaine. The chain is HTH-type transcriptional regulator BetI from Vibrio parahaemolyticus serotype O3:K6 (strain RIMD 2210633).